We begin with the raw amino-acid sequence, 280 residues long: Protein MGF 505-3R (280 aa).

The protein belongs to the asfivirus MGF 505 family.

In terms of biological role, plays a role in virus cell tropism, and may be required for efficient virus replication in macrophages. The protein is Protein MGF 505-3R of Ornithodoros (relapsing fever ticks).